The following is a 453-amino-acid chain: Phosphoglucosamine mutase (453 aa).

The Phosphoserine intermediate role is filled by Ser102. Ser102, Asp244, Asp246, and Asp248 together coordinate Mg(2+). The residue at position 102 (Ser102) is a Phosphoserine.

Belongs to the phosphohexose mutase family. It depends on Mg(2+) as a cofactor. Post-translationally, activated by phosphorylation.

It catalyses the reaction alpha-D-glucosamine 1-phosphate = D-glucosamine 6-phosphate. Functionally, catalyzes the conversion of glucosamine-6-phosphate to glucosamine-1-phosphate. In Pelobacter propionicus (strain DSM 2379 / NBRC 103807 / OttBd1), this protein is Phosphoglucosamine mutase.